Reading from the N-terminus, the 329-residue chain is Putative glycosyltransferase CsbB (329 aa).

2 helical membrane passes run 231–251 (CFYT…ATFV) and 264–284 (FTII…LGII).

Belongs to the glycosyltransferase 2 family. GtrB subfamily.

It is found in the cell membrane. This chain is Putative glycosyltransferase CsbB (csbB), found in Bacillus subtilis (strain 168).